We begin with the raw amino-acid sequence, 207 residues long: Thiamine-phosphate synthase (207 aa).

Residues 36–40 (QLRMK) and asparagine 68 contribute to the 4-amino-2-methyl-5-(diphosphooxymethyl)pyrimidine site. Mg(2+) contacts are provided by aspartate 69 and aspartate 88. Serine 106 contributes to the 4-amino-2-methyl-5-(diphosphooxymethyl)pyrimidine binding site. A 2-[(2R,5Z)-2-carboxy-4-methylthiazol-5(2H)-ylidene]ethyl phosphate-binding site is contributed by 132–134 (TNT). Lysine 135 contributes to the 4-amino-2-methyl-5-(diphosphooxymethyl)pyrimidine binding site. 2-[(2R,5Z)-2-carboxy-4-methylthiazol-5(2H)-ylidene]ethyl phosphate contacts are provided by residues glycine 162 and 182 to 183 (VS).

It belongs to the thiamine-phosphate synthase family. The cofactor is Mg(2+).

The enzyme catalyses 2-[(2R,5Z)-2-carboxy-4-methylthiazol-5(2H)-ylidene]ethyl phosphate + 4-amino-2-methyl-5-(diphosphooxymethyl)pyrimidine + 2 H(+) = thiamine phosphate + CO2 + diphosphate. The catalysed reaction is 2-(2-carboxy-4-methylthiazol-5-yl)ethyl phosphate + 4-amino-2-methyl-5-(diphosphooxymethyl)pyrimidine + 2 H(+) = thiamine phosphate + CO2 + diphosphate. It carries out the reaction 4-methyl-5-(2-phosphooxyethyl)-thiazole + 4-amino-2-methyl-5-(diphosphooxymethyl)pyrimidine + H(+) = thiamine phosphate + diphosphate. Its pathway is cofactor biosynthesis; thiamine diphosphate biosynthesis; thiamine phosphate from 4-amino-2-methyl-5-diphosphomethylpyrimidine and 4-methyl-5-(2-phosphoethyl)-thiazole: step 1/1. Functionally, condenses 4-methyl-5-(beta-hydroxyethyl)thiazole monophosphate (THZ-P) and 2-methyl-4-amino-5-hydroxymethyl pyrimidine pyrophosphate (HMP-PP) to form thiamine monophosphate (TMP). The protein is Thiamine-phosphate synthase of Methanococcus maripaludis (strain C6 / ATCC BAA-1332).